A 201-amino-acid polypeptide reads, in one-letter code: Large ribosomal subunit protein bL9 (201 aa).

Residues 150–165 (EAERQAAGEDLTQRRD) are compositionally biased toward basic and acidic residues. The tract at residues 150 to 201 (EAERQAAGEDLTQRRDDEEEEAVEAAEFFESEELAPGDEEEEAAGEEEDAKE) is disordered. The segment covering 166 to 201 (DEEEEAVEAAEFFESEELAPGDEEEEAAGEEEDAKE) has biased composition (acidic residues).

It belongs to the bacterial ribosomal protein bL9 family.

Its function is as follows. Binds to the 23S rRNA. The polypeptide is Large ribosomal subunit protein bL9 (Parvibaculum lavamentivorans (strain DS-1 / DSM 13023 / NCIMB 13966)).